Consider the following 224-residue polypeptide: Dehydration-responsive element-binding protein 1G (224 aa).

The span at Met-1–Pro-16 shows a compositional bias: polar residues. A disordered region spans residues Met-1 to Lys-46. A DNA-binding region (AP2/ERF) is located at residues Val-54 to Ala-111. Disordered regions lie at residues Ala-139–Thr-161 and Pro-200–Tyr-224.

It belongs to the AP2/ERF transcription factor family. ERF subfamily.

The protein localises to the nucleus. In terms of biological role, transcriptional activator that binds specifically to the DNA sequence 5'-[AG]CCGAC-3'. Binding to the C-repeat/DRE element mediates high salinity- and dehydration-inducible transcription. This is Dehydration-responsive element-binding protein 1G (DREB1G) from Oryza sativa subsp. japonica (Rice).